The primary structure comprises 133 residues: Urease subunit beta (133 aa).

Residues 106 to 133 (VFRPNDSNQNAAVKNDAGEDNANKKGGK) are disordered.

The protein belongs to the urease beta subunit family. As to quaternary structure, heterotrimer of UreA (gamma), UreB (beta) and UreC (alpha) subunits. Three heterotrimers associate to form the active enzyme.

It localises to the cytoplasm. The enzyme catalyses urea + 2 H2O + H(+) = hydrogencarbonate + 2 NH4(+). Its pathway is nitrogen metabolism; urea degradation; CO(2) and NH(3) from urea (urease route): step 1/1. In Staphylococcus epidermidis (strain ATCC 12228 / FDA PCI 1200), this protein is Urease subunit beta.